The chain runs to 442 residues: Probable glycine dehydrogenase (decarboxylating) subunit 1 (442 aa).

Belongs to the GcvP family. N-terminal subunit subfamily. The glycine cleavage system is composed of four proteins: P, T, L and H. In this organism, the P 'protein' is a heterodimer of two subunits.

The catalysed reaction is N(6)-[(R)-lipoyl]-L-lysyl-[glycine-cleavage complex H protein] + glycine + H(+) = N(6)-[(R)-S(8)-aminomethyldihydrolipoyl]-L-lysyl-[glycine-cleavage complex H protein] + CO2. Its function is as follows. The glycine cleavage system catalyzes the degradation of glycine. The P protein binds the alpha-amino group of glycine through its pyridoxal phosphate cofactor; CO(2) is released and the remaining methylamine moiety is then transferred to the lipoamide cofactor of the H protein. In Geotalea daltonii (strain DSM 22248 / JCM 15807 / FRC-32) (Geobacter daltonii), this protein is Probable glycine dehydrogenase (decarboxylating) subunit 1.